We begin with the raw amino-acid sequence, 424 residues long: Adenylosuccinate synthetase (424 aa).

Residues 12 to 18 (GDEGKGK) and 40 to 42 (GHT) contribute to the GTP site. The active-site Proton acceptor is the Asp-13. Residues Asp-13 and Gly-40 each coordinate Mg(2+). Residues 13 to 16 (DEGK), 38 to 41 (NAGH), Thr-130, Arg-144, Asn-220, Thr-235, and Arg-299 each bind IMP. The active-site Proton donor is the His-41. 295 to 301 (VTTGRRR) lines the substrate pocket. Residues Arg-301, 327–329 (KLD), and 412–414 (GTG) contribute to the GTP site.

This sequence belongs to the adenylosuccinate synthetase family. Homodimer. Mg(2+) is required as a cofactor.

It localises to the cytoplasm. The catalysed reaction is IMP + L-aspartate + GTP = N(6)-(1,2-dicarboxyethyl)-AMP + GDP + phosphate + 2 H(+). It participates in purine metabolism; AMP biosynthesis via de novo pathway; AMP from IMP: step 1/2. Plays an important role in the de novo pathway and in the salvage pathway of purine nucleotide biosynthesis. Catalyzes the first committed step in the biosynthesis of AMP from IMP. The protein is Adenylosuccinate synthetase of Neosartorya fischeri (strain ATCC 1020 / DSM 3700 / CBS 544.65 / FGSC A1164 / JCM 1740 / NRRL 181 / WB 181) (Aspergillus fischerianus).